We begin with the raw amino-acid sequence, 90 residues long: DNA-binding protein HU (90 aa).

The protein belongs to the bacterial histone-like protein family. As to quaternary structure, homodimer.

Histone-like DNA-binding protein which is capable of wrapping DNA to stabilize it, and thus to prevent its denaturation under extreme environmental conditions. The sequence is that of DNA-binding protein HU (hup) from Staphylococcus aureus (strain COL).